Here is a 348-residue protein sequence, read N- to C-terminus: Major outer membrane protein (348 aa).

Residues 1-20 (MKKTIVALAVAAVAATSANA) form the signal peptide.

In terms of assembly, disulfide bond interactions within and between MOMP molecules and other components form high molecular-weight oligomers.

The protein resides in the cell outer membrane. Structural rigidity of the outer membrane of elementary bodies and porin forming, permitting diffusion of solutes through the intracellular reticulate body membrane. In Pasteurella multocida (strain Pm70), this protein is Major outer membrane protein (ompH).